Reading from the N-terminus, the 508-residue chain is MADGPVAELLLRRLEASDGGLDSAELAAELGMEHQAVVGAVKSLQALGEVIEAELRSTKRWELTAEGEEIAREGSHEARVFRSIPPEGLAQSELMRLPSGKVGFSKAMSNKWIRVDKSAADGPRVFRVVDSMEDEVQRRLQLVRGGQAEKLGEKERSELRKRKLLAEVILKTYWVSKGSAFSTSISKQETELSPEMISSGSWRDRPFKPYNFLAHGVLPDSGHLHPLLKVRSQFRQIFLEMGFTEMPTDNFIESSFWNFDALFQPQQHPARDQHDTFFLRDPAEALQLPMDYVQRVKRTHSQGGYGSQGYKYNWKLDEARKNLLRTHTTSASARALYRLAQKKPFTPVKYFSIDRVFRNETLDATHLAEFHQIEGVVADHGLTLGHLMGVLREFFTKLGITQLRFKPAYNPYTEPSMEVFSYHQGLKKWVEVGNSGVFRPEMLLPMGLPENVSVIAWGLSLERPTMIKYGINNIRELVGHKVNLQMVYDSPLCRLDAEPRPPPTQEAA.

Alanine 2 carries the N-acetylalanine modification. A Phosphothreonine modification is found at threonine 190. Phosphoserine is present on residues serine 193 and serine 301. The residue at position 311 (lysine 311) is an N6-acetyllysine. Residues threonine 329, 372–374 (QIE), and tyrosine 412 contribute to the L-phenylalanine site. Glutamate 414 contacts Mg(2+). Phenylalanine 438 is a binding site for L-phenylalanine.

The protein belongs to the class-II aminoacyl-tRNA synthetase family. Phe-tRNA synthetase alpha subunit type 2 subfamily. Heterotetramer; dimer of two heterodimers formed by FARSA and FARSB. Requires Mg(2+) as cofactor.

It localises to the cytoplasm. It catalyses the reaction tRNA(Phe) + L-phenylalanine + ATP = L-phenylalanyl-tRNA(Phe) + AMP + diphosphate + H(+). The polypeptide is Phenylalanine--tRNA ligase alpha subunit (FARSA) (Pongo abelii (Sumatran orangutan)).